The sequence spans 966 residues: Isoleucine--tRNA ligase (966 aa).

Positions 1 to 16 are enriched in basic and acidic residues; it reads MSDDKRAKSDKNEKNK. The disordered stretch occupies residues 1 to 24; the sequence is MSDDKRAKSDKNEKNKYPVNLLDT. Residues 69-79 carry the 'HIGH' region motif; sequence PYANGDIHIGH. Glu-599 provides a ligand contact to L-isoleucyl-5'-AMP. A 'KMSKS' region motif is present at residues 640–644; sequence KMSKS. Lys-643 is an ATP binding site. Positions 929, 932, 949, and 952 each coordinate Zn(2+).

Belongs to the class-I aminoacyl-tRNA synthetase family. IleS type 1 subfamily. As to quaternary structure, monomer. Zn(2+) is required as a cofactor.

Its subcellular location is the cytoplasm. It catalyses the reaction tRNA(Ile) + L-isoleucine + ATP = L-isoleucyl-tRNA(Ile) + AMP + diphosphate. Functionally, catalyzes the attachment of isoleucine to tRNA(Ile). As IleRS can inadvertently accommodate and process structurally similar amino acids such as valine, to avoid such errors it has two additional distinct tRNA(Ile)-dependent editing activities. One activity is designated as 'pretransfer' editing and involves the hydrolysis of activated Val-AMP. The other activity is designated 'posttransfer' editing and involves deacylation of mischarged Val-tRNA(Ile). This chain is Isoleucine--tRNA ligase, found in Cupriavidus taiwanensis (strain DSM 17343 / BCRC 17206 / CCUG 44338 / CIP 107171 / LMG 19424 / R1) (Ralstonia taiwanensis (strain LMG 19424)).